The sequence spans 413 residues: Arginine biosynthesis bifunctional protein ArgJ 1 (413 aa).

6 residues coordinate substrate: threonine 154, lysine 180, threonine 191, glutamate 277, asparagine 408, and threonine 413. Threonine 191 acts as the Nucleophile in catalysis.

Belongs to the ArgJ family. In terms of assembly, heterotetramer of two alpha and two beta chains.

The protein resides in the cytoplasm. It catalyses the reaction N(2)-acetyl-L-ornithine + L-glutamate = N-acetyl-L-glutamate + L-ornithine. It carries out the reaction L-glutamate + acetyl-CoA = N-acetyl-L-glutamate + CoA + H(+). It functions in the pathway amino-acid biosynthesis; L-arginine biosynthesis; L-ornithine and N-acetyl-L-glutamate from L-glutamate and N(2)-acetyl-L-ornithine (cyclic): step 1/1. Its pathway is amino-acid biosynthesis; L-arginine biosynthesis; N(2)-acetyl-L-ornithine from L-glutamate: step 1/4. In terms of biological role, catalyzes two activities which are involved in the cyclic version of arginine biosynthesis: the synthesis of N-acetylglutamate from glutamate and acetyl-CoA as the acetyl donor, and of ornithine by transacetylation between N(2)-acetylornithine and glutamate. The protein is Arginine biosynthesis bifunctional protein ArgJ 1 of Nostoc sp. (strain PCC 7120 / SAG 25.82 / UTEX 2576).